A 228-amino-acid chain; its full sequence is 7-cyano-7-deazaguanine synthase (228 aa).

Residue leucine 9–leucine 19 coordinates ATP. Residues cysteine 193, cysteine 203, cysteine 206, and cysteine 209 each contribute to the Zn(2+) site.

It belongs to the QueC family. It depends on Zn(2+) as a cofactor.

It catalyses the reaction 7-carboxy-7-deazaguanine + NH4(+) + ATP = 7-cyano-7-deazaguanine + ADP + phosphate + H2O + H(+). The protein operates within purine metabolism; 7-cyano-7-deazaguanine biosynthesis. In terms of biological role, catalyzes the ATP-dependent conversion of 7-carboxy-7-deazaguanine (CDG) to 7-cyano-7-deazaguanine (preQ(0)). The sequence is that of 7-cyano-7-deazaguanine synthase from Rickettsia africae (strain ESF-5).